Here is a 174-residue protein sequence, read N- to C-terminus: Peptide deformylase (174 aa).

Cys96 and His138 together coordinate Fe cation. Glu139 is a catalytic residue. Fe cation is bound at residue His142.

The protein belongs to the polypeptide deformylase family. Fe(2+) serves as cofactor.

The enzyme catalyses N-terminal N-formyl-L-methionyl-[peptide] + H2O = N-terminal L-methionyl-[peptide] + formate. In terms of biological role, removes the formyl group from the N-terminal Met of newly synthesized proteins. Requires at least a dipeptide for an efficient rate of reaction. N-terminal L-methionine is a prerequisite for activity but the enzyme has broad specificity at other positions. This is Peptide deformylase from Helicobacter pylori (strain G27).